Here is a 40-residue protein sequence, read N- to C-terminus: MKALYMVFVLWVLIGCFLRCKERMGSEEKQAQEDPGDQDL.

Positions 1–20 (MKALYMVFVLWVLIGCFLRC) are cleaved as a signal peptide.

The protein resides in the secreted. Its function is as follows. May play a role in protection or detoxification. The polypeptide is Submaxillary gland androgen-regulated protein 2, isoform epsilon (Smr2) (Mus musculus (Mouse)).